The sequence spans 515 residues: WUSCHEL-related homeobox 12 (515 aa).

2 stretches are compositionally biased toward polar residues: residues 23–32 (QQQPDMNGNG) and 44–57 (TAAT…SLLS). Disordered stretches follow at residues 23–76 (QQQP…WNPR), 130–156 (NKLR…PPST), and 176–195 (LLAA…GSSK). Residues 62 to 71 (EGTRNPEPKP) show a composition bias toward basic and acidic residues. The segment at residues 68 to 132 (EPKPRWNPRP…NRKSRTKNKL (65 aa)) is a DNA-binding region (homeobox; WUS-type). The span at 130-143 (NKLRAAGHHHHHGR) shows a compositional bias: basic residues. 2 stretches are compositionally biased toward low complexity: residues 144 to 156 (AAAL…PPST) and 177 to 195 (LAAT…GSSK).

Belongs to the WUS homeobox family.

It is found in the nucleus. Transcription factor which may be involved in developmental processes. This is WUSCHEL-related homeobox 12 (WOX12) from Oryza sativa subsp. japonica (Rice).